We begin with the raw amino-acid sequence, 315 residues long: Lamassu protein LmuA (315 aa).

Functionally, component of antiviral defense system Lamassu type I, composed of LmuA and LmuB. Expression of Lamassu type I in B.subtilis (strain BEST7003) confers resistance to phages phi3T, SpBeta and SPR. This Bacillus sp. (strain NCIM 5461 / CCTCC AB 2011126 / NIO-1130) protein is Lamassu protein LmuA.